We begin with the raw amino-acid sequence, 368 residues long: Alanine racemase (368 aa).

K40 (proton acceptor; specific for D-alanine) is an active-site residue. N6-(pyridoxal phosphate)lysine is present on K40. Residue R134 coordinates substrate. The Proton acceptor; specific for L-alanine role is filled by Y263. M310 lines the substrate pocket.

Belongs to the alanine racemase family. Pyridoxal 5'-phosphate serves as cofactor.

It catalyses the reaction L-alanine = D-alanine. It participates in amino-acid biosynthesis; D-alanine biosynthesis; D-alanine from L-alanine: step 1/1. Its function is as follows. Catalyzes the interconversion of L-alanine and D-alanine. May also act on other amino acids. The protein is Alanine racemase (alr) of Listeria innocua serovar 6a (strain ATCC BAA-680 / CLIP 11262).